The primary structure comprises 350 residues: MPVLHNRISNDALKAKMLVESEPRTTISFYKYFHIADPKATRDALYQLFTALNVFGRVYLAHEGINAQISVPASNVETFRAQLYAFDPALEGLRLNIALDDDGKSFWVLRMKVRDRIVADGIDDPHFDASNVGEYLQAAEVNAMLDDPDALFIDMRNHYEYEVGHFENALEIPADTFREQLPKAVEMMQAHKDKKIVMYCTGGIRCEKASAWMKHNGFNKVWHIEGGIIEYARKAREQGLPVRFIGKNFVFDERMGERISDEIIAHCHQCGAPCDSHTNCKNDGCHLLFIQCPVCAEKYKGCCSEICCEESALPPEEQRRRRAGRENGNKIFNKSRGRLNTTLGIPDPTE.

One can recognise a Rhodanese domain in the interval 146-240 (DDPDALFIDM…YARKAREQGL (95 aa)). Cysteine 200 (cysteine persulfide intermediate) is an active-site residue.

This sequence belongs to the TrhO family.

The catalysed reaction is uridine(34) in tRNA + AH2 + O2 = 5-hydroxyuridine(34) in tRNA + A + H2O. Its function is as follows. Catalyzes oxygen-dependent 5-hydroxyuridine (ho5U) modification at position 34 in tRNAs. The polypeptide is tRNA uridine(34) hydroxylase (Shigella sonnei (strain Ss046)).